Reading from the N-terminus, the 505-residue chain is MAQVINTNSLSLLTQNNLNKSQSSLSSAIERLSSGLRINSAKDDAAGQAIANRFTSNIKGLTQASRNANDGISIAQTTEGALNEINNNLQRVRELSVQATNGTNSDSDLKSIQDEIQQRLEEIDRVSNQTQFNGVKVLSQDNQMKIQVGANDGETITIDLQKIDVKSLGLDGFNVNGPKEATVGDLKSSFKNVTGYDTYAAGADKYRVDINSGAVVTDAVAPDKVYVNAANGQLTTDDAENNTAVDLFKTTKSTAGTAEAKAIAGAIKGGKEGDTFDYKGVTFTIDTKTGDDGNGKVSTTINGEKVTLTVADIGIGAADVNAATLQSSKNVYTSVVNGQFTFDDKTKNESAKLSDLEANNAVKGESKITVNGAEYTANATGDKITLAGKTMFIDKTASGVSTLINEDAAAAKKSTANPLASIDSALSKVDAVRSSLGAIQNRFDSAITNLGNTVTNLNSARSRIEDADYATEVSNMSKAQILQQAGTSVLAQANQVPQNVLSLLR.

It belongs to the bacterial flagellin family.

It is found in the secreted. It localises to the bacterial flagellum. Functionally, flagellin is the subunit protein which polymerizes to form the filaments of bacterial flagella. The polypeptide is Flagellin (fliC) (Salmonella rostock).